Here is a 471-residue protein sequence, read N- to C-terminus: Probable ribonuclease FAU-1 (471 aa).

The protein belongs to the FAU-1 family.

Functionally, probable RNase involved in rRNA stability through maturation and/or degradation of precursor rRNAs. Binds to RNA in loop regions with AU-rich sequences. The polypeptide is Probable ribonuclease FAU-1 (Thermococcus gammatolerans (strain DSM 15229 / JCM 11827 / EJ3)).